A 287-amino-acid polypeptide reads, in one-letter code: Undecaprenyl-diphosphatase (287 aa).

7 helical membrane passes run 6 to 26 (LYLIKAFFLGIIEGLTEFIPV), 45 to 65 (SGKVFEVVIQFGSILAVMWIF), 85 to 105 (AFTRNLLLAFLPAAVVGAIFI), 111 to 131 (VFYHPGVVAVTLVLGGLIMLW), 204 to 224 (ATEFSFFLAMPTMLGAATYDL), 238 to 258 (AIAVGFAAAFISALVVVRAVL), and 265 to 285 (TYRGFAWYRIALGIVVAAWLM).

The protein belongs to the UppP family.

It localises to the cell inner membrane. The catalysed reaction is di-trans,octa-cis-undecaprenyl diphosphate + H2O = di-trans,octa-cis-undecaprenyl phosphate + phosphate + H(+). Functionally, catalyzes the dephosphorylation of undecaprenyl diphosphate (UPP). Confers resistance to bacitracin. This is Undecaprenyl-diphosphatase from Bordetella petrii (strain ATCC BAA-461 / DSM 12804 / CCUG 43448).